We begin with the raw amino-acid sequence, 146 residues long: Large-conductance mechanosensitive channel (146 aa).

3 consecutive transmembrane segments (helical) span residues 17–37 (IDLA…DSLV), 40–60 (IIMP…QKFV), and 89–109 (LTIL…VKLI).

The protein belongs to the MscL family. Homopentamer.

It is found in the cell inner membrane. Functionally, channel that opens in response to stretch forces in the membrane lipid bilayer. May participate in the regulation of osmotic pressure changes within the cell. The sequence is that of Large-conductance mechanosensitive channel from Acinetobacter baylyi (strain ATCC 33305 / BD413 / ADP1).